A 353-amino-acid chain; its full sequence is Rhodopsin (353 aa).

Topologically, residues Met1–Ala36 are extracellular. N-linked (GlcNAc...) asparagine glycosylation is found at Asn2 and Asn15. The helical transmembrane segment at Tyr37–Val61 threads the bilayer. The Cytoplasmic segment spans residues Thr62–Asn73. Residues Tyr74–Tyr96 form a helical membrane-spanning segment. The Extracellular segment spans residues Thr97–Cys110. A disulfide bond links Cys110 and Cys187. A helical membrane pass occupies residues Asn111–Val133. The 'Ionic lock' involved in activated form stabilization motif lies at Glu134–Trp136. Residues Glu134–His152 lie on the Cytoplasmic side of the membrane. Residues Ala153–Val173 traverse the membrane as a helical segment. Topologically, residues Gly174–Ser202 are extracellular. Asn200 carries an N-linked (GlcNAc...) asparagine glycan. The chain crosses the membrane as a helical span at residues Phe203 to Gly224. At Arg225–Arg252 the chain is on the cytoplasmic side. Residues Met253 to Tyr274 form a helical membrane-spanning segment. Residues Ile275–Val286 are Extracellular-facing. A helical transmembrane segment spans residues Phe287–Leu308. Lys296 carries the post-translational modification N6-(retinylidene)lysine. The Cytoplasmic portion of the chain corresponds to Met309–Ala353. 2 S-palmitoyl cysteine lipidation sites follow: Cys322 and Cys323. The segment at Glu331–Ala353 is disordered. The segment covering Ala334 to Ala353 has biased composition (low complexity).

The protein belongs to the G-protein coupled receptor 1 family. Opsin subfamily. Post-translationally, phosphorylated on some or all of the serine and threonine residues present in the C-terminal region. In terms of processing, contains one covalently linked retinal chromophore.

The protein resides in the membrane. It localises to the cell projection. It is found in the cilium. The protein localises to the photoreceptor outer segment. Photoreceptor required for image-forming vision at low light intensity. While most salt water fish species use retinal as chromophore, most freshwater fish use 3-dehydroretinal, or a mixture of retinal and 3-dehydroretinal. Light-induced isomerization of 11-cis to all-trans retinal triggers a conformational change that activates signaling via G-proteins. Subsequent receptor phosphorylation mediates displacement of the bound G-protein alpha subunit by arrestin and terminates signaling. This is Rhodopsin (rho) from Dicentrarchus labrax (European seabass).